Consider the following 231-residue polypeptide: Thrombin-like enzyme leucurobin (231 aa).

A Peptidase S1 domain is found at 1–223 (VIGGDECDIN…YLPWIQSIIA (223 aa)). 6 disulfide bridges follow: C7-C139, C26-C42, C74-C230, C118-C184, C150-C163, and C174-C199. Residues H41 and D86 each act as charge relay system in the active site. N146 is a glycosylation site (N-linked (GlcNAc...) asparagine). S178 functions as the Charge relay system in the catalytic mechanism. N-linked (GlcNAc...) asparagine glycosylation occurs at N225.

Belongs to the peptidase S1 family. Snake venom subfamily. In terms of assembly, monomer. Glycosylated. As to expression, expressed by the venom gland.

It is found in the secreted. It carries out the reaction Selective cleavage of Arg-|-Xaa bond in fibrinogen, to form fibrin, and release fibrinopeptide A. The specificity of further degradation of fibrinogen varies with species origin of the enzyme.. Its activity is regulated as follows. Inhibited by PMSF and benzamidine. Its clotting effect is strongly inhibited by antibothropic serum. Is not inhibited by heparin. In terms of biological role, thrombin-like snake venom serine protease that cleaves Arg-Gly bonds in alpha-chain of fibrinogen (FGA). Induces temporary episodes of opisthotonos and rapid rolling around the long axis of the animal (gyroxin-like effect), when injected into the tail veins of mice (0.143 ug/g mouse). The protein is Thrombin-like enzyme leucurobin of Bothrops leucurus (Whitetail lancehead).